We begin with the raw amino-acid sequence, 365 residues long: 2-aminoethylphosphonate--pyruvate transaminase (365 aa).

K194 carries the post-translational modification N6-(pyridoxal phosphate)lysine.

Belongs to the class-V pyridoxal-phosphate-dependent aminotransferase family. PhnW subfamily. In terms of assembly, homodimer. Pyridoxal 5'-phosphate is required as a cofactor.

The enzyme catalyses (2-aminoethyl)phosphonate + pyruvate = phosphonoacetaldehyde + L-alanine. Involved in phosphonate degradation. The sequence is that of 2-aminoethylphosphonate--pyruvate transaminase from Bacillus cereus (strain ATCC 10987 / NRS 248).